The sequence spans 155 residues: 3-hydroxyacyl-[acyl-carrier-protein] dehydratase FabZ (155 aa).

The active site involves His58.

The protein belongs to the thioester dehydratase family. FabZ subfamily.

It is found in the cytoplasm. It carries out the reaction a (3R)-hydroxyacyl-[ACP] = a (2E)-enoyl-[ACP] + H2O. Involved in unsaturated fatty acids biosynthesis. Catalyzes the dehydration of short chain beta-hydroxyacyl-ACPs and long chain saturated and unsaturated beta-hydroxyacyl-ACPs. The protein is 3-hydroxyacyl-[acyl-carrier-protein] dehydratase FabZ of Rhizobium leguminosarum bv. trifolii (strain WSM2304).